We begin with the raw amino-acid sequence, 259 residues long: UPF0246 protein PputGB1_4560 (259 aa).

Belongs to the UPF0246 family.

In Pseudomonas putida (strain GB-1), this protein is UPF0246 protein PputGB1_4560.